We begin with the raw amino-acid sequence, 276 residues long: tRNA dimethylallyltransferase (276 aa).

The interaction with substrate tRNA stretch occupies residues 9–12 (DSLS).

It belongs to the IPP transferase family. In terms of assembly, monomer. Mg(2+) is required as a cofactor.

The catalysed reaction is adenosine(37) in tRNA + dimethylallyl diphosphate = N(6)-dimethylallyladenosine(37) in tRNA + diphosphate. Catalyzes the transfer of a dimethylallyl group onto the adenine at position 37 in tRNAs that read codons beginning with uridine, leading to the formation of N6-(dimethylallyl)adenosine (i(6)A). The chain is tRNA dimethylallyltransferase (miaA) from Helicobacter pylori (strain HPAG1).